We begin with the raw amino-acid sequence, 409 residues long: MQYLKPINVFSEIGRLKKVLLHRPGKELENLTPSIMKRLLFDDIPYLHVAIQEHDSFADTLRGNGVEVVYIEDLISETLSNDDSIKEQFISQFILEAGIRTENKTRALKDYFCNMSVNDMISNMIAGVTRDDLKNYKSDSLNSLVNSEYPLIIDPMPNILFTRDPFASIGHGLTINRMSTKTRHRETIFAEYIFKYHPIYKDNVPIWYNRDEDTTLEGGDELVLSRDVLAIGVSERTESESVEKVARKLFEQKISFNTILAFQIPQSRAYMHLDTVFTQIDHTTFTSFISDDMKFTIYALTYDVSSGSIKVKSEKAKLEDILGFYLGCKVNIIKCAGGDLIHGAREQWNDGANTLAIAPGEVIVYSRNHMTNKLLEEFGIKVYQIPSSELSRGRGGPRCMSMPLIREDI.

The active-site Amidino-cysteine intermediate is the cysteine 399.

Belongs to the arginine deiminase family.

The protein resides in the cytoplasm. It carries out the reaction L-arginine + H2O = L-citrulline + NH4(+). It functions in the pathway amino-acid degradation; L-arginine degradation via ADI pathway; carbamoyl phosphate from L-arginine: step 1/2. The chain is Arginine deiminase from Borrelia duttonii (strain Ly).